The following is a 404-amino-acid chain: MSVKPSWGPGPSEGVTAVPTSDLGEIHNWTELLDLFNHTLSECHVELSQSTKRVVLFALYLAMFVVGLVENLLVICVNWRGSGRAGLMNLYILNMAIADLGIVLSLPVWMLEVTLDYTWLWGSFSCRFTHYFYFVNMYSSIFFLVCLSVDRYVTLTSASPSWQRYQHRVRRAMCAGIWVLSAIIPLPEVVHIQLVEGPEPMCLFMAPFETYSTWALAVALSTTILGFLLPFPLITVFNVLTACRLRQPGQPKSRRHCLLLCAYVAVFVMCWLPYHVTLLLLTLHGTHISLHCHLVHLLYFFYDVIDCFSMLHCVINPILYNFLSPHFRGRLLNAVVHYLPKDQTKAGTCASSSSCSTQHSIIITKGDSQPAAAAPHPEPSLSFQAHHLLPNTSPISPTQPLTPS.

Residues 1 to 57 (MSVKPSWGPGPSEGVTAVPTSDLGEIHNWTELLDLFNHTLSECHVELSQSTKRVVLF) lie on the Extracellular side of the membrane. N-linked (GlcNAc...) asparagine glycans are attached at residues asparagine 28 and asparagine 37. Residues 58-79 (ALYLAMFVVGLVENLLVICVNW) form a helical membrane-spanning segment. Residues 80 to 90 (RGSGRAGLMNL) lie on the Cytoplasmic side of the membrane. A helical membrane pass occupies residues 91–113 (YILNMAIADLGIVLSLPVWMLEV). Topologically, residues 114 to 127 (TLDYTWLWGSFSCR) are extracellular. An intrachain disulfide couples cysteine 126 to cysteine 202. A helical transmembrane segment spans residues 128–149 (FTHYFYFVNMYSSIFFLVCLSV). Topologically, residues 150-170 (DRYVTLTSASPSWQRYQHRVR) are cytoplasmic. A helical transmembrane segment spans residues 171–193 (RAMCAGIWVLSAIIPLPEVVHIQ). At 194 to 217 (LVEGPEPMCLFMAPFETYSTWALA) the chain is on the extracellular side. The helical transmembrane segment at 218-239 (VALSTTILGFLLPFPLITVFNV) threads the bilayer. At 240 to 258 (LTACRLRQPGQPKSRRHCL) the chain is on the cytoplasmic side. A helical transmembrane segment spans residues 259-280 (LLCAYVAVFVMCWLPYHVTLLL). The Extracellular segment spans residues 281–299 (LTLHGTHISLHCHLVHLLY). The helical transmembrane segment at 300–320 (FFYDVIDCFSMLHCVINPILY) threads the bilayer. Topologically, residues 321 to 404 (NFLSPHFRGR…ISPTQPLTPS (84 aa)) are cytoplasmic.

Belongs to the G-protein coupled receptor 1 family. Highly expressed in heart, skeletal muscle, immune system, adrenal gland and liver.

It is found in the cell membrane. Orphan receptor. The chain is G-protein coupled receptor 182 (GPR182) from Homo sapiens (Human).